Here is a 239-residue protein sequence, read N- to C-terminus: Small ribosomal subunit protein uS3c (239 aa).

The 97-residue stretch at 43–139 (IKNYIQKNRK…RLNISIEKVK (97 aa)) folds into the KH type-2 domain. Residues 50–80 (NRKKGSNRKIESDSSSEVITHNRKTDSGSSS) form a disordered region.

Belongs to the universal ribosomal protein uS3 family. As to quaternary structure, part of the 30S ribosomal subunit.

It is found in the plastid. The protein resides in the chloroplast. The polypeptide is Small ribosomal subunit protein uS3c (rps3) (Agrostis stolonifera (Creeping bentgrass)).